We begin with the raw amino-acid sequence, 451 residues long: UDP-N-acetylmuramoylalanine--D-glutamate ligase (451 aa).

120–126 (GSNGKTT) serves as a coordination point for ATP.

This sequence belongs to the MurCDEF family.

It is found in the cytoplasm. The catalysed reaction is UDP-N-acetyl-alpha-D-muramoyl-L-alanine + D-glutamate + ATP = UDP-N-acetyl-alpha-D-muramoyl-L-alanyl-D-glutamate + ADP + phosphate + H(+). The protein operates within cell wall biogenesis; peptidoglycan biosynthesis. Functionally, cell wall formation. Catalyzes the addition of glutamate to the nucleotide precursor UDP-N-acetylmuramoyl-L-alanine (UMA). This chain is UDP-N-acetylmuramoylalanine--D-glutamate ligase, found in Bacillus velezensis (strain DSM 23117 / BGSC 10A6 / LMG 26770 / FZB42) (Bacillus amyloliquefaciens subsp. plantarum).